Here is a 542-residue protein sequence, read N- to C-terminus: Carboxypeptidase Y (542 aa).

An N-terminal signal peptide occupies residues Met-1 to Ala-21. Residues Leu-22–Arg-127 constitute a propeptide that is removed on maturation. 5 disulfides stabilise this stretch: Cys-182-Cys-421, Cys-316-Cys-330, Cys-340-Cys-363, Cys-347-Cys-356, and Cys-385-Cys-391. Asn-213 carries N-linked (GlcNAc...) asparagine glycosylation. Ser-269 is an active-site residue. An N-linked (GlcNAc...) asparagine glycan is attached at Asn-291. The active site involves Asp-461. Cys-464 lines the substrate pocket. The active site involves His-518. Met-519 contributes to the substrate binding site.

It belongs to the peptidase S10 family.

Its subcellular location is the vacuole. The enzyme catalyses Release of a C-terminal amino acid with broad specificity.. Involved in degradation of small peptides. The sequence is that of Carboxypeptidase Y (CPY1) from Candida albicans (Yeast).